The sequence spans 216 residues: Adenylate kinase (216 aa).

13-18 (GAGKGT) is a binding site for ATP. Residues 33–66 (TTGDALRANKTKDITHLDVEYDTPGAYMDAGELV) form an NMP region. Residues threonine 34, arginine 39, 64 to 66 (ELV), 89 to 92 (GYPR), and glutamine 96 contribute to the AMP site. Residues 125–162 (GRRVCEDCGATFHVSFNQPETEGVCDACGGSLYQREDD) are LID. Arginine 126 provides a ligand contact to ATP. The Zn(2+) site is built by cysteine 129 and cysteine 132. 135 to 136 (TF) is an ATP binding site. The Zn(2+) site is built by cysteine 149 and cysteine 152. Positions 159 and 170 each coordinate AMP. Position 198 (arginine 198) interacts with ATP.

Belongs to the adenylate kinase family. In terms of assembly, monomer.

Its subcellular location is the cytoplasm. The catalysed reaction is AMP + ATP = 2 ADP. Its pathway is purine metabolism; AMP biosynthesis via salvage pathway; AMP from ADP: step 1/1. Functionally, catalyzes the reversible transfer of the terminal phosphate group between ATP and AMP. Plays an important role in cellular energy homeostasis and in adenine nucleotide metabolism. The polypeptide is Adenylate kinase (Halobacterium salinarum (strain ATCC 700922 / JCM 11081 / NRC-1) (Halobacterium halobium)).